The primary structure comprises 757 residues: Serine/threonine-protein phosphatase 2A 56 kDa regulatory subunit delta isoform (757 aa).

Basic residues predominate over residues 1–11; the sequence is MMRGFKQRLIK. 2 disordered regions span residues 1–172 and 188–250; these read MMRG…EDHA and ISNA…NPDT. The segment covering 12 to 21 has biased composition (low complexity); the sequence is KTTGSSSSSS. Residues 23–34 show a composition bias toward basic and acidic residues; that stretch reads KKKDKEKEKEKS. Low complexity-rich tracts occupy residues 35–66, 86–119, and 128–147; these read STTSSTSKKPASASSSSHGTTHSSASSTGSKS, SSTSKTKTATTPSSSSSSSRSSSVSRSGSSSTKK, and QSKQSQQPSQSQKQGSSSSS. A compositionally biased stretch (basic and acidic residues) spans 160-172; that stretch reads TKDDKSTSGEDHA. The segment covering 197–216 has biased composition (low complexity); that stretch reads SSDVENGNSNNNNMNINTSN. The segment covering 217–228 has biased composition (polar residues); it reads TQDANHASSQSI. Phosphothreonine is present on residues Thr-242 and Thr-257. The interval 734-757 is disordered; the sequence is SFNTASENNTLNEENENDCDSEIQ. A compositionally biased stretch (acidic residues) spans 746–757; the sequence is EENENDCDSEIQ.

It belongs to the phosphatase 2A regulatory subunit B family. As to quaternary structure, PP2A consists of a common heterodimeric core enzyme, composed of a 36 kDa catalytic subunit (subunit C) and a 65 kDa constant regulatory subunit (PR65 or subunit A), that associates with a variety of regulatory subunits. Proteins that associate with the core dimer include three families of regulatory subunits B (the R2/B/PR55/B55, R3/B''/PR72/PR130/PR59 and R5/B'/B56 families), the 48 kDa variable regulatory subunit, viral proteins, and cell signaling molecules.

It is found in the cytoplasm. The protein localises to the nucleus. The B regulatory subunit might modulate substrate selectivity and catalytic activity, and might also direct the localization of the catalytic enzyme to a particular subcellular compartment. Its function is as follows. Multicopy suppressor of ROX3 and HSP60. This Saccharomyces cerevisiae (strain ATCC 204508 / S288c) (Baker's yeast) protein is Serine/threonine-protein phosphatase 2A 56 kDa regulatory subunit delta isoform (RTS1).